A 190-amino-acid chain; its full sequence is Orotate phosphoribosyltransferase (190 aa).

Residues Arg101, Lys102, Lys105, His107, and 128 to 136 (EDVVTTGGS) each bind 5-phospho-alpha-D-ribose 1-diphosphate. Residues Thr132 and Arg160 each coordinate orotate.

This sequence belongs to the purine/pyrimidine phosphoribosyltransferase family. PyrE subfamily. In terms of assembly, homodimer. The cofactor is Mg(2+).

It catalyses the reaction orotidine 5'-phosphate + diphosphate = orotate + 5-phospho-alpha-D-ribose 1-diphosphate. It functions in the pathway pyrimidine metabolism; UMP biosynthesis via de novo pathway; UMP from orotate: step 1/2. In terms of biological role, catalyzes the transfer of a ribosyl phosphate group from 5-phosphoribose 1-diphosphate to orotate, leading to the formation of orotidine monophosphate (OMP). In Synechococcus sp. (strain CC9605), this protein is Orotate phosphoribosyltransferase.